A 179-amino-acid chain; its full sequence is ATP synthase subunit delta (179 aa).

It belongs to the ATPase delta chain family. In terms of assembly, F-type ATPases have 2 components, F(1) - the catalytic core - and F(0) - the membrane proton channel. F(1) has five subunits: alpha(3), beta(3), gamma(1), delta(1), epsilon(1). F(0) has three main subunits: a(1), b(2) and c(10-14). The alpha and beta chains form an alternating ring which encloses part of the gamma chain. F(1) is attached to F(0) by a central stalk formed by the gamma and epsilon chains, while a peripheral stalk is formed by the delta and b chains.

Its subcellular location is the cell membrane. Its function is as follows. F(1)F(0) ATP synthase produces ATP from ADP in the presence of a proton or sodium gradient. F-type ATPases consist of two structural domains, F(1) containing the extramembraneous catalytic core and F(0) containing the membrane proton channel, linked together by a central stalk and a peripheral stalk. During catalysis, ATP synthesis in the catalytic domain of F(1) is coupled via a rotary mechanism of the central stalk subunits to proton translocation. This protein is part of the stalk that links CF(0) to CF(1). It either transmits conformational changes from CF(0) to CF(1) or is implicated in proton conduction. This chain is ATP synthase subunit delta, found in Bacillus sp. (strain PS3).